Reading from the N-terminus, the 101-residue chain is Urease subunit beta (101 aa).

Belongs to the urease beta subunit family. Heterotrimer of UreA (gamma), UreB (beta) and UreC (alpha) subunits. Three heterotrimers associate to form the active enzyme.

It is found in the cytoplasm. It carries out the reaction urea + 2 H2O + H(+) = hydrogencarbonate + 2 NH4(+). Its pathway is nitrogen metabolism; urea degradation; CO(2) and NH(3) from urea (urease route): step 1/1. The polypeptide is Urease subunit beta (Psychromonas ingrahamii (strain DSM 17664 / CCUG 51855 / 37)).